Here is a 399-residue protein sequence, read N- to C-terminus: Phosphoglycerate kinase (399 aa).

Substrate contacts are provided by residues 22-24 (DFN), Arg-37, 60-63 (HFGR), Arg-118, and Arg-151. ATP is bound by residues Lys-201, Glu-322, and 352–355 (GGDS).

It belongs to the phosphoglycerate kinase family. As to quaternary structure, monomer.

It localises to the cytoplasm. It catalyses the reaction (2R)-3-phosphoglycerate + ATP = (2R)-3-phospho-glyceroyl phosphate + ADP. The protein operates within carbohydrate degradation; glycolysis; pyruvate from D-glyceraldehyde 3-phosphate: step 2/5. The polypeptide is Phosphoglycerate kinase (Wolbachia sp. subsp. Brugia malayi (strain TRS)).